The sequence spans 442 residues: UDP-N-acetylmuramate--L-alanine ligase (442 aa).

Residue 110-116 (GAHGKTS) participates in ATP binding.

It belongs to the MurCDEF family.

It localises to the cytoplasm. The catalysed reaction is UDP-N-acetyl-alpha-D-muramate + L-alanine + ATP = UDP-N-acetyl-alpha-D-muramoyl-L-alanine + ADP + phosphate + H(+). Its pathway is cell wall biogenesis; peptidoglycan biosynthesis. In terms of biological role, cell wall formation. This Streptococcus thermophilus (strain ATCC BAA-491 / LMD-9) protein is UDP-N-acetylmuramate--L-alanine ligase.